The sequence spans 75 residues: Small ribosomal subunit protein bS18 (75 aa).

This sequence belongs to the bacterial ribosomal protein bS18 family. As to quaternary structure, part of the 30S ribosomal subunit. Forms a tight heterodimer with protein bS6.

In terms of biological role, binds as a heterodimer with protein bS6 to the central domain of the 16S rRNA, where it helps stabilize the platform of the 30S subunit. This Thermotoga maritima (strain ATCC 43589 / DSM 3109 / JCM 10099 / NBRC 100826 / MSB8) protein is Small ribosomal subunit protein bS18.